A 175-amino-acid chain; its full sequence is Co-chaperone protein HscB homolog (175 aa).

Positions 7–79 (SHFELFHLPA…LKRATYLLHL (73 aa)) constitute a J domain.

Belongs to the HscB family. As to quaternary structure, interacts with HscA and stimulates its ATPase activity.

Its function is as follows. Co-chaperone involved in the maturation of iron-sulfur cluster-containing proteins. Seems to help targeting proteins to be folded toward HscA. The chain is Co-chaperone protein HscB homolog from Burkholderia thailandensis (strain ATCC 700388 / DSM 13276 / CCUG 48851 / CIP 106301 / E264).